We begin with the raw amino-acid sequence, 43 residues long: Protein PsbN (43 aa).

A helical membrane pass occupies residues 7–27 (IAIFISGLLVSFTGYALYTAF).

Belongs to the PsbN family.

Its subcellular location is the plastid. The protein resides in the chloroplast thylakoid membrane. Functionally, may play a role in photosystem I and II biogenesis. In Suaeda maritima (Annual sea blite), this protein is Protein PsbN.